Reading from the N-terminus, the 272-residue chain is 2-dehydro-3-deoxyphosphooctonate aldolase (272 aa).

This sequence belongs to the KdsA family.

Its subcellular location is the cytoplasm. The enzyme catalyses D-arabinose 5-phosphate + phosphoenolpyruvate + H2O = 3-deoxy-alpha-D-manno-2-octulosonate-8-phosphate + phosphate. Its pathway is carbohydrate biosynthesis; 3-deoxy-D-manno-octulosonate biosynthesis; 3-deoxy-D-manno-octulosonate from D-ribulose 5-phosphate: step 2/3. The protein operates within bacterial outer membrane biogenesis; lipopolysaccharide biosynthesis. The chain is 2-dehydro-3-deoxyphosphooctonate aldolase from Geobacter metallireducens (strain ATCC 53774 / DSM 7210 / GS-15).